The following is a 570-amino-acid chain: Formate--tetrahydrofolate ligase (570 aa).

T65–T72 contacts ATP.

This sequence belongs to the formate--tetrahydrofolate ligase family.

It carries out the reaction (6S)-5,6,7,8-tetrahydrofolate + formate + ATP = (6R)-10-formyltetrahydrofolate + ADP + phosphate. The protein operates within one-carbon metabolism; tetrahydrofolate interconversion. This Shewanella putrefaciens (strain CN-32 / ATCC BAA-453) protein is Formate--tetrahydrofolate ligase.